Consider the following 130-residue polypeptide: Small ribosomal subunit protein uS9 (130 aa).

The protein belongs to the universal ribosomal protein uS9 family.

The protein is Small ribosomal subunit protein uS9 of Tolumonas auensis (strain DSM 9187 / NBRC 110442 / TA 4).